Consider the following 503-residue polypeptide: Catalase (503 aa).

Positions 1 to 21 (MHMSKSFLIISMGFVAVSVQA) are cleaved as a signal peptide. Active-site residues include His-72 and Asn-145. Tyr-353 serves as a coordination point for heme.

This sequence belongs to the catalase family. Heme is required as a cofactor.

Its subcellular location is the periplasm. It carries out the reaction 2 H2O2 = O2 + 2 H2O. Its function is as follows. Decomposes hydrogen peroxide into water and oxygen; serves to protect cells from the toxic effects of hydrogen peroxide. In Vibrio cholerae serotype O1 (strain ATCC 39315 / El Tor Inaba N16961), this protein is Catalase.